A 431-amino-acid chain; its full sequence is MSWLSSLYPIFIASTAFCALGLLLVAIILLSRKFLIKVHPCKLRINNDDSLTKTVDSGKTLLSSLLDSGIAIPSPCGGKAACKQCKIRITKNVDEPLETDRSTFSKQQLEQGWRLSCQTKVQHDMNLEIEERYFNASSWEGTVVSNENVATFIKELVLSVDPARPIPFKPGGYLQITVPSYKTNTSDWKQTMDPQYYSDWETFHLFDKVIDHQSLDANSANKAYSLASYPAELPLIKFNIRIATPPFINKSPDPTIPWGVCSSYIFSLKPGDKVTVSGPYGESFMKEDNRPVIFLIGGAGSSFGRSHILDLLLSKHTNRELTLWYGARSLKENIYQEEYEKLEKEFPNFHYHLVLSQPLQEDLDKGWDSKDPIKTNFLFKAFELGQLSKLPNPEDYLYYVCGPALHNSSILTLLDNYGVERSSIILDDFGS.

Residues 10 to 30 (IFIASTAFCALGLLLVAIILL) form a helical membrane-spanning segment. The 2Fe-2S ferredoxin-type domain occupies 41 to 133 (CKLRINNDDS…DMNLEIEERY (93 aa)). 4 residues coordinate [2Fe-2S] cluster: Cys-76, Cys-82, Cys-85, and Cys-117. The 151-residue stretch at 136 to 286 (ASSWEGTVVS…SGPYGESFMK (151 aa)) folds into the FAD-binding FR-type domain. The interval 289–413 (NRPVIFLIGG…ALHNSSILTL (125 aa)) is catalytic.

The protein belongs to the NqrF family. Composed of six subunits; NqrA, NqrB, NqrC, NqrD, NqrE and NqrF. [2Fe-2S] cluster is required as a cofactor. It depends on FAD as a cofactor.

It is found in the cell inner membrane. The catalysed reaction is a ubiquinone + n Na(+)(in) + NADH + H(+) = a ubiquinol + n Na(+)(out) + NAD(+). Functionally, NQR complex catalyzes the reduction of ubiquinone-1 to ubiquinol by two successive reactions, coupled with the transport of Na(+) ions from the cytoplasm to the periplasm. The first step is catalyzed by NqrF, which accepts electrons from NADH and reduces ubiquinone-1 to ubisemiquinone by a one-electron transfer pathway. The protein is Na(+)-translocating NADH-quinone reductase subunit F of Chlamydia muridarum (strain MoPn / Nigg).